The following is an 889-amino-acid chain: Putative receptor-like protein kinase At3g46340 (889 aa).

The N-terminal stretch at methionine 1–alanine 25 is a signal peptide. At glutamate 26–methionine 514 the chain is on the extracellular side. Residues asparagine 185, asparagine 239, asparagine 259, asparagine 292, asparagine 316, asparagine 342, asparagine 366, asparagine 419, asparagine 435, asparagine 448, asparagine 467, and asparagine 474 are each glycosylated (N-linked (GlcNAc...) asparagine). LRR repeat units lie at residues arginine 414 to threonine 437, histidine 438 to methionine 460, and serine 462 to lysine 483. A helical transmembrane segment spans residues isoleucine 515–valine 535. The Cytoplasmic segment spans residues phenylalanine 536–arginine 889. Residues leucine 544–threonine 566 form a disordered region. A Protein kinase domain is found at lysine 585–phenylalanine 874. Residues leucine 591–valine 599 and lysine 614 each bind ATP. Tyrosine 659 is modified (phosphotyrosine). The Proton acceptor role is filled by aspartate 711. Residue serine 745 is modified to Phosphoserine. A phosphothreonine mark is found at threonine 746 and threonine 751. Tyrosine 759 carries the phosphotyrosine modification. The interval asparagine 863–arginine 889 is disordered. Residues lysine 864–phenylalanine 880 are compositionally biased toward polar residues.

It belongs to the protein kinase superfamily. Ser/Thr protein kinase family.

It is found in the cell membrane. The enzyme catalyses L-seryl-[protein] + ATP = O-phospho-L-seryl-[protein] + ADP + H(+). It carries out the reaction L-threonyl-[protein] + ATP = O-phospho-L-threonyl-[protein] + ADP + H(+). The sequence is that of Putative receptor-like protein kinase At3g46340 from Arabidopsis thaliana (Mouse-ear cress).